Reading from the N-terminus, the 475-residue chain is Ankyrin repeat, SAM and basic leucine zipper domain-containing protein 1 (475 aa).

The disordered stretch occupies residues 1 to 25 (MAASALRGLPVAGGGESSESEDDGW). Phosphoserine is present on residues Ser-17, Ser-18, and Ser-20. ANK repeat units lie at residues 45-74 (EKKE…SVDS), 78-107 (YGWT…NASF), 110-144 (DKQS…DPNV), 148-177 (RLMT…EVNT), 181-210 (NGYT…NKML), and 214-243 (DGKM…PLEG). The region spanning 272-334 (SYTAFGDLEV…KILAALKELQ (63 aa)) is the SAM domain.

Interacts with DDX4, PIWIL1, RANBP9 and TDRD1.

Its subcellular location is the cytoplasm. In terms of biological role, plays a central role during spermatogenesis by repressing transposable elements and preventing their mobilization, which is essential for the germline integrity. Acts via the piRNA metabolic process, which mediates the repression of transposable elements during meiosis by forming complexes composed of piRNAs and Piwi proteins and governs the methylation and subsequent repression of transposons. Its association with pi-bodies suggests a participation in the primary piRNAs metabolic process. Required prior to the pachytene stage to facilitate the production of multiple types of piRNAs, including those associated with repeats involved in the regulation of retrotransposons. May act by mediating protein-protein interactions during germ cell maturation. In Pan troglodytes (Chimpanzee), this protein is Ankyrin repeat, SAM and basic leucine zipper domain-containing protein 1 (ASZ1).